A 450-amino-acid chain; its full sequence is 3-phosphoshikimate 1-carboxyvinyltransferase (450 aa).

3-phosphoshikimate-binding residues include K23, S24, and R28. Position 23 (K23) interacts with phosphoenolpyruvate. 2 residues coordinate phosphoenolpyruvate: G96 and R124. 3-phosphoshikimate-binding residues include S167, S168, Q169, S196, E311, and H340. Phosphoenolpyruvate is bound at residue Q169. The Proton acceptor role is filled by E311. Residues R344, R385, and K410 each coordinate phosphoenolpyruvate. Residues G426–G450 form a disordered region.

The protein belongs to the EPSP synthase family. In terms of assembly, monomer.

It localises to the cytoplasm. It catalyses the reaction 3-phosphoshikimate + phosphoenolpyruvate = 5-O-(1-carboxyvinyl)-3-phosphoshikimate + phosphate. Its pathway is metabolic intermediate biosynthesis; chorismate biosynthesis; chorismate from D-erythrose 4-phosphate and phosphoenolpyruvate: step 6/7. Functionally, catalyzes the transfer of the enolpyruvyl moiety of phosphoenolpyruvate (PEP) to the 5-hydroxyl of shikimate-3-phosphate (S3P) to produce enolpyruvyl shikimate-3-phosphate and inorganic phosphate. The protein is 3-phosphoshikimate 1-carboxyvinyltransferase of Mycobacterium bovis (strain ATCC BAA-935 / AF2122/97).